A 1117-amino-acid chain; its full sequence is Mitochondrial protein cyt-4 (1117 aa).

Positions 561 to 916 constitute an RNB domain; the sequence is RQDFYTSTVY…LVHWQIQAAL (356 aa). Residues 705–730 are disordered; it reads VVLEVGTPPSAEDEAPTRKMTKPDEL. Over residues 719 to 730 the composition is skewed to basic and acidic residues; that stretch reads APTRKMTKPDEL.

It belongs to the RNR ribonuclease family. As to quaternary structure, homodimer.

It localises to the mitochondrion. In terms of biological role, required for RNA 5'- and 3'-end processing and splicing. May act on the RNA processing enzymes directly, or it may act on other regulatory molecules, which influence the activity or synthesis of these enzymes. This is Mitochondrial protein cyt-4 (cyt-4) from Neurospora crassa (strain ATCC 24698 / 74-OR23-1A / CBS 708.71 / DSM 1257 / FGSC 987).